The primary structure comprises 174 residues: Nicotinamide-nucleotide adenylyltransferase (174 aa).

This sequence belongs to the archaeal NMN adenylyltransferase family.

The protein resides in the cytoplasm. It catalyses the reaction beta-nicotinamide D-ribonucleotide + ATP + H(+) = diphosphate + NAD(+). It participates in cofactor biosynthesis; NAD(+) biosynthesis; NAD(+) from nicotinamide D-ribonucleotide: step 1/1. The chain is Nicotinamide-nucleotide adenylyltransferase from Methanospirillum hungatei JF-1 (strain ATCC 27890 / DSM 864 / NBRC 100397 / JF-1).